Reading from the N-terminus, the 293-residue chain is GPN-loop GTPase 3 (293 aa).

GTP is bound at residue 13-18; that stretch reads GAGKST. The Gly-Pro-Asn (GPN)-loop; involved in dimer interface motif lies at 70 to 72; that stretch reads GPN. A GTP-binding site is contributed by 176–179; the sequence is SKMD. Over residues 272–281 the composition is skewed to basic and acidic residues; it reads HEAQEPREPN. Positions 272 to 293 are disordered; that stretch reads HEAQEPREPNDEQDVDYEDADI. Residues 282–293 show a composition bias toward acidic residues; sequence DEQDVDYEDADI.

The protein belongs to the GPN-loop GTPase family. As to quaternary structure, heterodimers with gpn1 or gpn2. Binds to RNA polymerase II (RNAPII).

Functionally, small GTPase required for proper nuclear import of RNA polymerase II and III (RNAPII and RNAPIII). May act at an RNAP assembly step prior to nuclear import. The polypeptide is GPN-loop GTPase 3 (Aspergillus fumigatus (strain ATCC MYA-4609 / CBS 101355 / FGSC A1100 / Af293) (Neosartorya fumigata)).